Consider the following 426-residue polypeptide: D-tagatose-1,6-bisphosphate aldolase subunit KbaZ (426 aa).

Belongs to the GatZ/KbaZ family. KbaZ subfamily. As to quaternary structure, forms a complex with KbaY.

It participates in carbohydrate metabolism; D-tagatose 6-phosphate degradation; D-glyceraldehyde 3-phosphate and glycerone phosphate from D-tagatose 6-phosphate: step 2/2. In terms of biological role, component of the tagatose-1,6-bisphosphate aldolase KbaYZ that is required for full activity and stability of the Y subunit. Could have a chaperone-like function for the proper and stable folding of KbaY. When expressed alone, KbaZ does not show any aldolase activity. This Escherichia coli (strain 55989 / EAEC) protein is D-tagatose-1,6-bisphosphate aldolase subunit KbaZ.